The chain runs to 727 residues: Catalase-peroxidase (727 aa).

Residues 1–26 (MDTKVETGGKCPVAHGPAGAKGRGNR) form a disordered region. A cross-link (tryptophyl-tyrosyl-methioninium (Trp-Tyr) (with M-245)) is located at residues 97-219 (WHSAGTYRIT…LGAVQMGLIY (123 aa)). The active-site Proton acceptor is the His-98. Residues 219–245 (YVNPEGPNGNPDPIAAARDIRETFSRM) constitute a cross-link (tryptophyl-tyrosyl-methioninium (Tyr-Met) (with W-97)). His-260 is a heme b binding site.

It belongs to the peroxidase family. Peroxidase/catalase subfamily. Homodimer or homotetramer. Requires heme b as cofactor. Post-translationally, formation of the three residue Trp-Tyr-Met cross-link is important for the catalase, but not the peroxidase activity of the enzyme.

The enzyme catalyses H2O2 + AH2 = A + 2 H2O. It carries out the reaction 2 H2O2 = O2 + 2 H2O. In terms of biological role, bifunctional enzyme with both catalase and broad-spectrum peroxidase activity. The protein is Catalase-peroxidase of Allorhizobium ampelinum (strain ATCC BAA-846 / DSM 112012 / S4) (Agrobacterium vitis (strain S4)).